The primary structure comprises 292 residues: MSESLGSVPGSLRSGVISPGLSLGADISSFTEYLRAHAPDQLPQARAEAMGLHRAADDIPHGTTIVAVSYPGGVILAGDRRATMGNLIATRDVKKVYITDEYSAAGIAGTAGIAIEMVRLFAVELEHYEKLEGVPLTLDGKVSRLASMVRGNLGAALQGLAAVPLLVGYDIDHDDPTERGRIFSFDVAGDRHEEFGGYQAIGSGSVFAKSSLKKLYRHDLDEASALAIAVEALYDAADDDSATGGPDIVRKIFPLAAVVDAGGAREVDAESIEAAARAIVERRAAEHEGGPR.

A propeptide spans 1 to 62 (MSESLGSVPG…HRAADDIPHG (62 aa)) (removed in mature form; by autocatalysis). The Nucleophile role is filled by T63.

The protein belongs to the peptidase T1B family. The 20S proteasome core is composed of 14 alpha and 14 beta subunits that assemble into four stacked heptameric rings, resulting in a barrel-shaped structure. The two inner rings, each composed of seven catalytic beta subunits, are sandwiched by two outer rings, each composed of seven alpha subunits. The catalytic chamber with the active sites is on the inside of the barrel. Has a gated structure, the ends of the cylinder being occluded by the N-termini of the alpha-subunits. Is capped by the proteasome-associated ATPase, ARC.

It is found in the cytoplasm. The catalysed reaction is Cleavage of peptide bonds with very broad specificity.. The protein operates within protein degradation; proteasomal Pup-dependent pathway. The formation of the proteasomal ATPase ARC-20S proteasome complex, likely via the docking of the C-termini of ARC into the intersubunit pockets in the alpha-rings, may trigger opening of the gate for substrate entry. Interconversion between the open-gate and close-gate conformations leads to a dynamic regulation of the 20S proteasome proteolysis activity. Functionally, component of the proteasome core, a large protease complex with broad specificity involved in protein degradation. This Gordonia bronchialis (strain ATCC 25592 / DSM 43247 / BCRC 13721 / JCM 3198 / KCTC 3076 / NBRC 16047 / NCTC 10667) (Rhodococcus bronchialis) protein is Proteasome subunit beta.